We begin with the raw amino-acid sequence, 174 residues long: UPF0336 protein MAP_3996c (174 aa).

Residues 11–131 (IGSHYRAPDY…VLAEIRSEVT (121 aa)) form the MaoC-like domain.

This sequence belongs to the UPF0336 family.

This is UPF0336 protein MAP_3996c from Mycolicibacterium paratuberculosis (strain ATCC BAA-968 / K-10) (Mycobacterium paratuberculosis).